Reading from the N-terminus, the 346-residue chain is Elongation factor Ts (346 aa).

Positions 80-83 (TDFV) are involved in Mg(2+) ion dislocation from EF-Tu.

This sequence belongs to the EF-Ts family.

Its subcellular location is the cytoplasm. In terms of biological role, associates with the EF-Tu.GDP complex and induces the exchange of GDP to GTP. It remains bound to the aminoacyl-tRNA.EF-Tu.GTP complex up to the GTP hydrolysis stage on the ribosome. The polypeptide is Elongation factor Ts (Streptococcus pneumoniae (strain 70585)).